Reading from the N-terminus, the 260-residue chain is Methyl-coenzyme M reductase I subunit gamma (260 aa).

Coenzyme M is bound at residue Arg-123.

The protein belongs to the methyl-coenzyme M reductase gamma subunit family. In terms of assembly, MCR is a hexamer of two alpha, two beta, and two gamma chains, forming a dimer of heterotrimers. Coenzyme F430 serves as cofactor.

The protein localises to the cytoplasm. The catalysed reaction is coenzyme B + methyl-coenzyme M = methane + coenzyme M-coenzyme B heterodisulfide. It participates in one-carbon metabolism; methyl-coenzyme M reduction; methane from methyl-coenzyme M: step 1/1. Functionally, component of the methyl-coenzyme M reductase (MCR) I that catalyzes the reductive cleavage of methyl-coenzyme M (CoM-S-CH3 or 2-(methylthio)ethanesulfonate) using coenzyme B (CoB or 7-mercaptoheptanoylthreonine phosphate) as reductant which results in the production of methane and the mixed heterodisulfide of CoB and CoM (CoM-S-S-CoB). This is the final step in methanogenesis. This is Methyl-coenzyme M reductase I subunit gamma (mcrG) from Methanocaldococcus jannaschii (strain ATCC 43067 / DSM 2661 / JAL-1 / JCM 10045 / NBRC 100440) (Methanococcus jannaschii).